The chain runs to 532 residues: Cytokinin dehydrogenase 1 (532 aa).

The N-terminal stretch at 1-17 (MAAIYLLIAALIASSHA) is a signal peptide. 2 N-linked (GlcNAc...) asparagine glycosylation sites follow: asparagine 52 and asparagine 63. An FAD-binding PCMH-type domain is found at 65–244 (TAALPAAVLF…TRARVAVEPA (180 aa)). FAD contacts are provided by phenylalanine 100, glycine 102, arginine 103, and glycine 104. Residue histidine 105 is modified to Pros-8alpha-FAD histidine. FAD-binding residues include serine 106 and glutamine 110. Asparagine 133 carries an N-linked (GlcNAc...) asparagine glycan. Residues aspartate 168, threonine 173, serine 179, valine 183, and isoleucine 234 each coordinate FAD. N-linked (GlcNAc...) asparagine glycosylation is found at asparagine 321 and asparagine 432. The FAD site is built by tyrosine 490, serine 525, and glutamine 528.

It belongs to the oxygen-dependent FAD-linked oxidoreductase family. Monomer. FAD serves as cofactor.

It is found in the secreted. The protein resides in the extracellular space. The catalysed reaction is N(6)-dimethylallyladenine + A + H2O = 3-methyl-2-butenal + adenine + AH2. In terms of biological role, catalyzes the oxidation of cytokinins, a family of N(6)-substituted adenine derivatives that are plant hormones, where the substituent is an isopentenyl group. In Oryza sativa subsp. japonica (Rice), this protein is Cytokinin dehydrogenase 1 (CKX1).